The sequence spans 215 residues: Transcription elongation factor A protein-like 4 (215 aa).

Methionine 1 is subject to N-acetylmethionine. Positions 1-133 (MEKLYSENEG…RKAKRKTNKG (133 aa)) are disordered. Phosphoserine is present on residues serine 6, serine 88, and serine 102. The segment covering 25–102 (QDERKPEVTC…KPEIEGKPES (78 aa)) has biased composition (basic and acidic residues).

Belongs to the TFS-II family. TFA subfamily.

The protein localises to the nucleus. May be involved in transcriptional regulation. The chain is Transcription elongation factor A protein-like 4 (TCEAL4) from Homo sapiens (Human).